The chain runs to 445 residues: UDP-glucuronic acid decarboxylase 2 (445 aa).

At alanine 2 the chain carries N-acetylalanine. Over 2–43 (ASELINRRHETDQPTADAYYPKPIKPWFTVTRPMRYMLREQR) the chain is Cytoplasmic. Residues 44–64 (LIFVLVGIAIATLVFTIFPRS) traverse the membrane as a helical; Signal-anchor for type II membrane protein segment. Residues 65–445 (TQSTPYSDPF…AATTTKTTSA (381 aa)) lie on the Lumenal side of the membrane. NAD(+) is bound at residue 149–174 (DNFFTGRKENVMHHFSNPNFEMIRHD). Arginine 258 is a binding site for substrate. The Proton acceptor role is filled by tyrosine 261. Residue 261–265 (YDEGK) coordinates NAD(+). Asparagine 290 is a substrate binding site. Residue arginine 302 coordinates NAD(+). Substrate contacts are provided by residues 303–307 (VVSNF), 320–327 (YGDGKQTR), and 387–391 (DPHKR).

The protein belongs to the NAD(P)-dependent epimerase/dehydratase family. UDP-glucuronic acid decarboxylase subfamily. Homodimer. Requires NAD(+) as cofactor. Ubiquitous.

The protein resides in the golgi apparatus. It localises to the golgi stack membrane. It carries out the reaction UDP-alpha-D-glucuronate + H(+) = UDP-alpha-D-xylose + CO2. It participates in nucleotide-sugar biosynthesis; UDP-alpha-D-xylose biosynthesis; UDP-alpha-D-xylose from UDP-alpha-D-glucuronate: step 1/1. Catalyzes the NAD-dependent decarboxylation of UDP-glucuronic acid to UDP-xylose. Necessary for the biosynthesis of the core tetrasaccharide in glycosaminoglycan biosynthesis. This is UDP-glucuronic acid decarboxylase 2 (UXS2) from Arabidopsis thaliana (Mouse-ear cress).